The chain runs to 379 residues: Protein COS2 (379 aa).

The Cytoplasmic portion of the chain corresponds to 1–72 (MKENELKNEK…WKLSNNCIYP (72 aa)). The chain crosses the membrane as a helical span at residues 73–93 (LIVSLLVLFLGPIFVLVICGL). Residues 94–254 (SRKRSLSKQL…FLCCIYVSRG (161 aa)) are Extracellular-facing. Residues 255 to 275 (MCLLLRTLYLGWILFMLVQGF) form a helical membrane-spanning segment. Residues 276 to 379 (QNIRVLIMSM…QLSRSEVLLV (104 aa)) lie on the Cytoplasmic side of the membrane.

It belongs to the DUP/COS family.

The protein resides in the membrane. The protein is Protein COS2 (COS2) of Saccharomyces cerevisiae (strain ATCC 204508 / S288c) (Baker's yeast).